Reading from the N-terminus, the 875-residue chain is Leucine--tRNA ligase (875 aa).

The short motif at 43-53 (PYPSGRIHMGH) is the 'HIGH' region element. The 'KMSKS' region motif lies at 633–637 (KMSKS). Lys-636 serves as a coordination point for ATP.

It belongs to the class-I aminoacyl-tRNA synthetase family.

The protein localises to the cytoplasm. It carries out the reaction tRNA(Leu) + L-leucine + ATP = L-leucyl-tRNA(Leu) + AMP + diphosphate. The protein is Leucine--tRNA ligase of Bartonella bacilliformis (strain ATCC 35685 / KC583 / Herrer 020/F12,63).